The chain runs to 247 residues: Type II restriction enzyme SmaI (247 aa).

The cofactor is Mg(2+). K(+) serves as cofactor.

The catalysed reaction is Endonucleolytic cleavage of DNA to give specific double-stranded fragments with terminal 5'-phosphates.. A P subtype restriction enzyme that recognizes the double-stranded sequence 5'-CCCGGG-3' and cleaves after C-3. The chain is Type II restriction enzyme SmaI (smaIR) from Serratia marcescens.